Here is a 453-residue protein sequence, read N- to C-terminus: 3-phosphoshikimate 1-carboxyvinyltransferase (453 aa).

3-phosphoshikimate contacts are provided by Lys-28, Ser-29, and Arg-33. Lys-28 is a phosphoenolpyruvate binding site. Phosphoenolpyruvate-binding residues include Gly-101 and Arg-129. Positions 174, 176, 326, and 353 each coordinate 3-phosphoshikimate. Gln-176 serves as a coordination point for phosphoenolpyruvate. Residue Asp-326 is the Proton acceptor of the active site. Arg-357 and Arg-405 together coordinate phosphoenolpyruvate.

This sequence belongs to the EPSP synthase family. Monomer.

It is found in the cytoplasm. The enzyme catalyses 3-phosphoshikimate + phosphoenolpyruvate = 5-O-(1-carboxyvinyl)-3-phosphoshikimate + phosphate. It participates in metabolic intermediate biosynthesis; chorismate biosynthesis; chorismate from D-erythrose 4-phosphate and phosphoenolpyruvate: step 6/7. In terms of biological role, catalyzes the transfer of the enolpyruvyl moiety of phosphoenolpyruvate (PEP) to the 5-hydroxyl of shikimate-3-phosphate (S3P) to produce enolpyruvyl shikimate-3-phosphate and inorganic phosphate. The sequence is that of 3-phosphoshikimate 1-carboxyvinyltransferase from Zymomonas mobilis subsp. mobilis (strain ATCC 31821 / ZM4 / CP4).